Reading from the N-terminus, the 176-residue chain is Large ribosomal subunit protein uL10 (176 aa).

The protein belongs to the universal ribosomal protein uL10 family. As to quaternary structure, part of the ribosomal stalk of the 50S ribosomal subunit. The N-terminus interacts with L11 and the large rRNA to form the base of the stalk. The C-terminus forms an elongated spine to which L12 dimers bind in a sequential fashion forming a multimeric L10(L12)X complex.

Forms part of the ribosomal stalk, playing a central role in the interaction of the ribosome with GTP-bound translation factors. The polypeptide is Large ribosomal subunit protein uL10 (rplJ) (Streptomyces coelicolor (strain ATCC BAA-471 / A3(2) / M145)).